The following is a 452-amino-acid chain: Chloride/fluoride channel protein (452 aa).

10 consecutive transmembrane segments (helical) span residues 23 to 43 (WLAL…LFLL), 57 to 77 (WVIW…HLIG), 97 to 117 (IVPL…HLFG), 160 to 180 (FASV…VLAI), 188 to 208 (LFPC…WGVV), 222 to 242 (LWSV…GLLF), 264 to 284 (PFAG…NHYI), 315 to 337 (VFTV…FYIG), 344 to 364 (LAPL…VAVF), and 386 to 408 (IAPL…GIYH).

It belongs to the chloride channel (TC 2.A.49) family.

It is found in the cell membrane. Transports chloride and fluoride with similar efficiency. The sequence is that of Chloride/fluoride channel protein (eriC) from Pseudomonas syringae pv. tomato (strain ATCC BAA-871 / DC3000).